The primary structure comprises 178 residues: Cytochrome b6-f complex iron-sulfur subunit (178 aa).

A helical membrane pass occupies residues 20–42 (LLTFGSVTGVALGSLYPVVKYFI). Positions 68 to 161 (WLANHSDGDR…IAVENDNVFV (94 aa)) constitute a Rieske domain. [2Fe-2S] cluster-binding residues include C107, H109, C125, and H128. A disulfide bridge connects residues C112 and C127.

Belongs to the Rieske iron-sulfur protein family. The 4 large subunits of the cytochrome b6-f complex are cytochrome b6, subunit IV (17 kDa polypeptide, PetD), cytochrome f and the Rieske protein, while the 4 small subunits are PetG, PetL, PetM and PetN. The complex functions as a dimer. The cofactor is [2Fe-2S] cluster.

It is found in the cellular thylakoid membrane. The catalysed reaction is 2 oxidized [plastocyanin] + a plastoquinol + 2 H(+)(in) = 2 reduced [plastocyanin] + a plastoquinone + 4 H(+)(out). In terms of biological role, component of the cytochrome b6-f complex, which mediates electron transfer between photosystem II (PSII) and photosystem I (PSI), cyclic electron flow around PSI, and state transitions. The sequence is that of Cytochrome b6-f complex iron-sulfur subunit from Prochlorococcus marinus (strain MIT 9303).